An 85-amino-acid chain; its full sequence is MNSALNGIKDDFENCETKDDLFKIIDKISKNCNFIVEQVESLPRRVDSAAILFDNLAVEIFNDVIYRQNGVAAKIRQGNGQDIDT.

This sequence belongs to the herpesviridae UL91 family.

In Homo sapiens (Human), this protein is Protein U62 (U62).